Here is a 287-residue protein sequence, read N- to C-terminus: Ribosomal RNA small subunit methyltransferase A (287 aa).

N28, L30, G55, E76, D101, and N125 together coordinate S-adenosyl-L-methionine.

This sequence belongs to the class I-like SAM-binding methyltransferase superfamily. rRNA adenine N(6)-methyltransferase family. RsmA subfamily.

It is found in the cytoplasm. The catalysed reaction is adenosine(1518)/adenosine(1519) in 16S rRNA + 4 S-adenosyl-L-methionine = N(6)-dimethyladenosine(1518)/N(6)-dimethyladenosine(1519) in 16S rRNA + 4 S-adenosyl-L-homocysteine + 4 H(+). Its function is as follows. Specifically dimethylates two adjacent adenosines (A1518 and A1519) in the loop of a conserved hairpin near the 3'-end of 16S rRNA in the 30S particle. May play a critical role in biogenesis of 30S subunits. The protein is Ribosomal RNA small subunit methyltransferase A of Alkaliphilus metalliredigens (strain QYMF).